A 93-amino-acid polypeptide reads, in one-letter code: Small ribosomal subunit protein uS19 (93 aa).

The protein belongs to the universal ribosomal protein uS19 family.

Its function is as follows. Protein S19 forms a complex with S13 that binds strongly to the 16S ribosomal RNA. This Oenococcus oeni (strain ATCC BAA-331 / PSU-1) protein is Small ribosomal subunit protein uS19.